A 417-amino-acid chain; its full sequence is Lipoyl synthase, mitochondrial (417 aa).

Residues Met-1–Tyr-26 constitute a mitochondrion transit peptide. A disordered region spans residues Ala-27–Asn-61. The segment covering Ala-44 to Asp-58 has biased composition (polar residues). Residues Cys-134, Cys-139, Cys-145, Cys-165, Cys-169, Cys-172, and Ser-380 each contribute to the [4Fe-4S] cluster site. The Radical SAM core domain occupies Gly-148–Leu-369. Positions Glu-398–Arg-417 are disordered.

Belongs to the radical SAM superfamily. Lipoyl synthase family. [4Fe-4S] cluster serves as cofactor.

The protein localises to the mitochondrion. It carries out the reaction [[Fe-S] cluster scaffold protein carrying a second [4Fe-4S](2+) cluster] + N(6)-octanoyl-L-lysyl-[protein] + 2 oxidized [2Fe-2S]-[ferredoxin] + 2 S-adenosyl-L-methionine + 4 H(+) = [[Fe-S] cluster scaffold protein] + N(6)-[(R)-dihydrolipoyl]-L-lysyl-[protein] + 4 Fe(3+) + 2 hydrogen sulfide + 2 5'-deoxyadenosine + 2 L-methionine + 2 reduced [2Fe-2S]-[ferredoxin]. It participates in protein modification; protein lipoylation via endogenous pathway; protein N(6)-(lipoyl)lysine from octanoyl-[acyl-carrier-protein]: step 2/2. Its function is as follows. Catalyzes the radical-mediated insertion of two sulfur atoms into the C-6 and C-8 positions of the octanoyl moiety bound to the lipoyl domains of lipoate-dependent enzymes, thereby converting the octanoylated domains into lipoylated derivatives. The protein is Lipoyl synthase, mitochondrial of Uncinocarpus reesii (strain UAMH 1704).